The chain runs to 356 residues: Glutamine synthetase root isozyme 3 (356 aa).

The 81-residue stretch at 19 to 99 (IIAEYIWIGG…VMCDCYTPAG (81 aa)) folds into the GS beta-grasp domain. In terms of domain architecture, GS catalytic spans 106–356 (KRYNAAKIFS…IAETTIIWKP (251 aa)).

The protein belongs to the glutamine synthetase family. In terms of assembly, homooctamer. As to expression, found in all the tissues examined with higher expression found in tissues of the root.

The protein resides in the cytoplasm. It catalyses the reaction L-glutamate + NH4(+) + ATP = L-glutamine + ADP + phosphate + H(+). In terms of biological role, plays a role in the flow of nitrogen into nitrogenous organic compounds. This is Glutamine synthetase root isozyme 3 (GLN4) from Zea mays (Maize).